Reading from the N-terminus, the 35-residue chain is Purotoxin-1 (35 aa).

4 disulfides stabilise this stretch: Cys3–Cys16, Cys10–Cys21, Cys15–Cys32, and Cys23–Cys30.

It belongs to the neurotoxin 33 family. Expressed by the venom gland.

The protein resides in the secreted. Inhibits P2RX3 receptors. Has an analgesic effect in rat. Enhances the high-affinity desensitization of P2RX3 purinoceptors. At 50 nM, decreases the IC(50) for ambient ATP from 46.5 nM to 12.7 nM in mouse P2RX3. This chain is Purotoxin-1, found in Alopecosa marikovskyi (Wolf spider).